The primary structure comprises 544 residues: Chaperonin GroEL (544 aa).

ATP is bound by residues 30-33, K51, 87-91, G415, and D495; these read TLGP and DGTTT.

It belongs to the chaperonin (HSP60) family. Forms a cylinder of 14 subunits composed of two heptameric rings stacked back-to-back. Interacts with the co-chaperonin GroES.

It localises to the cytoplasm. It catalyses the reaction ATP + H2O + a folded polypeptide = ADP + phosphate + an unfolded polypeptide.. Together with its co-chaperonin GroES, plays an essential role in assisting protein folding. The GroEL-GroES system forms a nano-cage that allows encapsulation of the non-native substrate proteins and provides a physical environment optimized to promote and accelerate protein folding. The protein is Chaperonin GroEL of Neisseria meningitidis serogroup B (strain ATCC BAA-335 / MC58).